The following is a 435-amino-acid chain: Serine/threonine-protein kinase 40 (435 aa).

The span at M1 to A10 shows a compositional bias: basic and acidic residues. A disordered region spans residues M1–S25. Residues F35–I332 form the Protein kinase domain. Residues L41–I49 and K66 contribute to the ATP site. D197 acts as the Proton acceptor in catalysis.

The protein belongs to the protein kinase superfamily. CAMK Ser/Thr protein kinase family.

It is found in the nucleus. The protein resides in the cytoplasm. The enzyme catalyses L-seryl-[protein] + ATP = O-phospho-L-seryl-[protein] + ADP + H(+). The catalysed reaction is L-threonyl-[protein] + ATP = O-phospho-L-threonyl-[protein] + ADP + H(+). In terms of biological role, may be a negative regulator of NF-kappa-B and p53-mediated gene transcription. In Pongo abelii (Sumatran orangutan), this protein is Serine/threonine-protein kinase 40 (STK40).